The chain runs to 179 residues: MKSTAISRRYAKALVNLAAPDGQLESTYAQLEQLQQAFACEPRLYKLLASPTLAADKIAGLLEGISNYLQLSTTLRNLLGLLQQRQRLEYFDALVADYRELADVQLGLVRARVCSAAPLDAAVQQAISAQLQKRYGKQAVLELAVEPELLGGVRIEVAGQVLDGTIRSGLRRMAGYLNS.

Belongs to the ATPase delta chain family. In terms of assembly, F-type ATPases have 2 components, F(1) - the catalytic core - and F(0) - the membrane proton channel. F(1) has five subunits: alpha(3), beta(3), gamma(1), delta(1), epsilon(1). F(0) has three main subunits: a(1), b(2) and c(10-14). The alpha and beta chains form an alternating ring which encloses part of the gamma chain. F(1) is attached to F(0) by a central stalk formed by the gamma and epsilon chains, while a peripheral stalk is formed by the delta and b chains.

It is found in the cell inner membrane. Functionally, f(1)F(0) ATP synthase produces ATP from ADP in the presence of a proton or sodium gradient. F-type ATPases consist of two structural domains, F(1) containing the extramembraneous catalytic core and F(0) containing the membrane proton channel, linked together by a central stalk and a peripheral stalk. During catalysis, ATP synthesis in the catalytic domain of F(1) is coupled via a rotary mechanism of the central stalk subunits to proton translocation. In terms of biological role, this protein is part of the stalk that links CF(0) to CF(1). It either transmits conformational changes from CF(0) to CF(1) or is implicated in proton conduction. The protein is ATP synthase subunit delta 1 of Syntrophotalea carbinolica (strain DSM 2380 / NBRC 103641 / GraBd1) (Pelobacter carbinolicus).